A 242-amino-acid polypeptide reads, in one-letter code: Protein LST7 (242 aa).

Residues 48 to 212 enclose the uDENN FLCN/SMCR8-type domain; it reads SCLLQFPEES…NKSKFGRNLV (165 aa).

Functionally, required for the nitrogen-regulated transport of amino acid permeases GAP1 and PUT4 from the Golgi to the cell surface. This Saccharomyces cerevisiae (strain ATCC 204508 / S288c) (Baker's yeast) protein is Protein LST7 (LST7).